A 76-amino-acid polypeptide reads, in one-letter code: Sulfur carrier protein TusA (76 aa).

Cys-15 serves as the catalytic Cysteine persulfide intermediate.

This sequence belongs to the sulfur carrier protein TusA family. As to quaternary structure, mostly a monomer, a small portion forms homodimer via intermolecular disulfide bonds. Tightly interacts with DsrEFH.

It localises to the cytoplasm. It functions in the pathway energy metabolism; sulfur metabolism. Functionally, sulfur carrier protein involved in sulfur trafficking for oxidative dissimilatory sulfur metabolism. Component of a sulfur relay system that starts with the sulfur-mobilizing rhodanese-like protein Rhd_2599 (Alvin_2599), which transfers the sulfur from a low-molecular-weight thiol, maybe glutathione, to the TusA protein (Alvin_2600); TusA serves as the sulfur donor for DsrEFH, which persulfurates DsrC; persulfurated DsrC very probably serves as a direct substrate for reverse-acting sulfite reductase, DsrAB. TusA seems to be not exclusively dedicated to sulfur oxidation and may have other important roles in the cell. Might also act as a sulfur mediator required for 2-thiouridine formation of tRNA. The polypeptide is Sulfur carrier protein TusA (Allochromatium vinosum (strain ATCC 17899 / DSM 180 / NBRC 103801 / NCIMB 10441 / D) (Chromatium vinosum)).